The primary structure comprises 340 residues: Nuclear hormone receptor family member nhr-197 (340 aa).

Positions 1–75 (MNCVVCSGRA…VGMTLAPLND (75 aa)) form a DNA-binding region, nuclear receptor. NR C4-type zinc fingers lie at residues 3–23 (CVVCSGRATNRNYGAMSCFAC) and 39–58 (CKRIQNCTIHFKIFPKCRAC). An NR LBD domain is found at 98–337 (KNDKNYSHFV…KRIMQDLFSN (240 aa)).

The protein belongs to the nuclear hormone receptor family.

Its subcellular location is the nucleus. Its function is as follows. Orphan nuclear receptor. The sequence is that of Nuclear hormone receptor family member nhr-197 (nhr-197) from Caenorhabditis elegans.